A 406-amino-acid chain; its full sequence is [Pyruvate dehydrogenase (acetyl-transferring)] kinase isozyme 3, mitochondrial (406 aa).

The 232-residue stretch at 131-362 (IEYKEKFGFD…DAVIYLKALS (232 aa)) folds into the Histidine kinase domain. 247-254 (ELFKNSMR) contacts ATP. Position 278 is an N6-succinyllysine (lysine 278). ATP contacts are provided by residues aspartate 287, 306–307 (ST), and 323–328 (GFGYGL). Positions 383–406 (TPEADDWSNPSSEPRDASKYKAKQ) are disordered. The span at 395 to 406 (EPRDASKYKAKQ) shows a compositional bias: basic and acidic residues.

It belongs to the PDK/BCKDK protein kinase family. In terms of assembly, homodimer. Interacts with the pyruvate dehydrogenase complex subunit DLAT, and is part of the multimeric pyruvate dehydrogenase complex that contains multiple copies of pyruvate dehydrogenase (E1), dihydrolipoamide acetyltransferase (DLAT, E2) and lipoamide dehydrogenase (DLD, E3). Expressed in heart, skeletal muscle, spinal cord, as well as fetal and adult brain.

The protein localises to the mitochondrion matrix. It carries out the reaction L-seryl-[pyruvate dehydrogenase E1 alpha subunit] + ATP = O-phospho-L-seryl-[pyruvate dehydrogenase E1 alpha subunit] + ADP + H(+). Its activity is regulated as follows. Activated by interaction with DLAT. Inhibited by AZD7545, dichloroacetate and radicicol. In terms of biological role, inhibits pyruvate dehydrogenase activity by phosphorylation of the E1 subunit PDHA1, and thereby regulates glucose metabolism and aerobic respiration. Can also phosphorylate PDHA2. Decreases glucose utilization and increases fat metabolism in response to prolonged fasting, and as adaptation to a high-fat diet. Plays a role in glucose homeostasis and in maintaining normal blood glucose levels in function of nutrient levels and under starvation. Plays a role in the generation of reactive oxygen species. The protein is [Pyruvate dehydrogenase (acetyl-transferring)] kinase isozyme 3, mitochondrial (PDK3) of Homo sapiens (Human).